Reading from the N-terminus, the 318-residue chain is GTP 3',8-cyclase (318 aa).

One can recognise a Radical SAM core domain in the interval K4–E218. R13 provides a ligand contact to GTP. [4Fe-4S] cluster-binding residues include C20 and C24. Y26 is a binding site for S-adenosyl-L-methionine. A [4Fe-4S] cluster-binding site is contributed by C27. A GTP-binding site is contributed by R62. G66 is an S-adenosyl-L-methionine binding site. T93 is a GTP binding site. S117 contacts S-adenosyl-L-methionine. K154 lines the GTP pocket. M188 serves as a coordination point for S-adenosyl-L-methionine. Residues C248 and C251 each coordinate [4Fe-4S] cluster. K253–R255 lines the GTP pocket. C265 provides a ligand contact to [4Fe-4S] cluster.

It belongs to the radical SAM superfamily. MoaA family. In terms of assembly, monomer and homodimer. Requires [4Fe-4S] cluster as cofactor.

It carries out the reaction GTP + AH2 + S-adenosyl-L-methionine = (8S)-3',8-cyclo-7,8-dihydroguanosine 5'-triphosphate + 5'-deoxyadenosine + L-methionine + A + H(+). Its pathway is cofactor biosynthesis; molybdopterin biosynthesis. Functionally, catalyzes the cyclization of GTP to (8S)-3',8-cyclo-7,8-dihydroguanosine 5'-triphosphate. The polypeptide is GTP 3',8-cyclase (Clostridium acetobutylicum (strain ATCC 824 / DSM 792 / JCM 1419 / IAM 19013 / LMG 5710 / NBRC 13948 / NRRL B-527 / VKM B-1787 / 2291 / W)).